The following is a 446-amino-acid chain: Maltoporin (446 aa).

The first 25 residues, 1 to 25 (MMITLRKLPLAVAVAAGVMSAQAMA), serve as a signal peptide directing secretion.

The protein belongs to the porin LamB (TC 1.B.3) family. Homotrimer formed of three 18-stranded antiparallel beta-barrels, containing three independent channels.

It is found in the cell outer membrane. It catalyses the reaction beta-maltose(in) = beta-maltose(out). Involved in the transport of maltose and maltodextrins. The sequence is that of Maltoporin from Escherichia coli O127:H6 (strain E2348/69 / EPEC).